The primary structure comprises 79 residues: Cytochrome b (79 aa).

Helical transmembrane passes span 1-7, 31-52, and 67-79; these read TAMFLAM, WLIR…YLHI, and WNVG…LTMM. H37 and H51 together coordinate heme b.

This sequence belongs to the cytochrome b family. The cytochrome bc1 complex contains 3 respiratory subunits (MT-CYB, CYC1 and UQCRFS1), 2 core proteins (UQCRC1 and UQCRC2) and probably 6 low-molecular weight proteins. Requires heme b as cofactor.

It localises to the mitochondrion inner membrane. In terms of biological role, component of the ubiquinol-cytochrome c reductase complex (complex III or cytochrome b-c1 complex) that is part of the mitochondrial respiratory chain. The b-c1 complex mediates electron transfer from ubiquinol to cytochrome c. Contributes to the generation of a proton gradient across the mitochondrial membrane that is then used for ATP synthesis. The protein is Cytochrome b (mt-cyb) of Hypsophrys nicaraguensis (Moga).